A 1009-amino-acid polypeptide reads, in one-letter code: Adhesion G-protein coupled receptor G2 (1009 aa).

Positions 1–37 (MLFSGGQYSPVGRPEEVLLIYKIFLVIICFHVILVTS) are cleaved as a signal peptide. Residues 38 to 617 (LKENGNSSLL…SRTSLPPSQM (580 aa)) lie on the Extracellular side of the membrane. N-linked (GlcNAc...) asparagine glycans are attached at residues Asn43, Asn77, Asn91, Asn103, Asn109, Asn127, Asn136, Asn154, Asn178, and Asn186. Disordered stretches follow at residues 279–305 (MTPS…ASSP) and 325–346 (SHTL…PSVP). Positions 280 to 293 (TPSTPSLTQESNLP) are enriched in polar residues. 9 N-linked (GlcNAc...) asparagine glycosylation sites follow: Asn362, Asn427, Asn448, Asn453, Asn520, Asn534, Asn539, Asn543, and Asn589. In terms of domain architecture, GAIN-B spans 453-611 (NTTTFAAQDP…GILLDLSRTS (159 aa)). 2 cysteine pairs are disulfide-bonded: Cys562–Cys593 and Cys581–Cys595. Residues 562-611 (CVFWDLGRNGGKGGWSSDGCSVKDKRMNETICTCSHLTSFGILLDLSRTS) are GPS. The interval 600–611 (SFGILLDLSRTS) is stachel. A helical transmembrane segment spans residues 618 to 640 (MALTFITYIGCGLSSIFLSVTLV). At 641–655 (TYIAFEKIRRDYPSK) the chain is on the cytoplasmic side. The chain crosses the membrane as a helical span at residues 656-679 (ILIQLCAALLLLNLIFLLDSWIAL). Topologically, residues 680-683 (YNTR) are extracellular. A helical transmembrane segment spans residues 684–709 (GFCIAVAVFLHYFLLVSFTWMGLEAF). Cysteines 686 and 770 form a disulfide. Topologically, residues 710–728 (HMYLALVKVFNTYIRKYIL) are cytoplasmic. Residues 729–751 (KFCIVGWGIPAVVVSIVLTISPD) traverse the membrane as a helical segment. Residues 752 to 776 (NYGIGSYGKFPNGTPDDFCWINSNV) are Extracellular-facing. The helical transmembrane segment at 777 to 802 (VFYITVVGYFCVIFLLNVSMFIVVLV) threads the bilayer. The Cytoplasmic segment spans residues 803 to 823 (QLCRIKKKKQLGAQRKTSIQD). Residues 824 to 845 (LRSIAGLTFLLGITWGFAFFAW) traverse the membrane as a helical segment. Residues 846-850 (GPVNV) lie on the Extracellular side of the membrane. A glycan (N-linked (GlcNAc...) asparagine) is linked at Asn849. A helical transmembrane segment spans residues 851 to 872 (TFMYLFAIFNTLQGFFIFIFYC). A 3beta-hydroxyandrost-5-en-17-one-binding site is contributed by Asn860. The Cytoplasmic segment spans residues 873–1009 (AAKENVRKQW…RGSLHFIEQM (137 aa)). Position 1002 is a phosphoserine (Ser1002).

The protein belongs to the G-protein coupled receptor 2 family. Adhesion G-protein coupled receptor (ADGR) subfamily. In terms of assembly, heterodimer of 2 chains generated by proteolytic processing; the large extracellular N-terminal fragment and the membrane-bound C-terminal fragment predominantly remain associated and non-covalently linked. Interacts with CFTR. Proteolytically cleaved into 2 subunits, an extracellular subunit and a seven-transmembrane subunit. In terms of processing, highly glycosylated. Epididymis-specific expression (at protein level). Associated with apical membranes of efferent ductule and proximal epididymal duct epithelia. Mainly expressed in the nonciliated principal cells of the proximal excurrent ducts.

Its subcellular location is the apical cell membrane. Its activity is regulated as follows. Forms a heterodimer of 2 chains generated by proteolytic processing that remain associated through non-covalent interactions mediated by the GAIN-B domain. In the inactivated receptor, the Stachel sequence (also named stalk) is embedded in the GAIN-B domain, where it adopts a beta-strand conformation. On activation, the Stachel moves into the 7 transmembrane region and adopts a twisted hook-shaped configuration that forms contacts within the receptor, leading to coupling of a G-alpha protein, which activates signaling. The cleaved GAIN-B and N-terminal domains can then dissociate from the rest of the receptor. Deoxycorticosterone (DOC) acts as an antagonist of ADGRG2. Functionally, adhesion G-protein coupled receptor (aGPCR) for steroid hormones, such as dehydroepiandrosterone (DHEA; also named 3beta-hydroxyandrost-5-en-17-one) and androstenedione. Involved in a signal transduction pathway controlling epididymal function and male fertility. Ligand binding causes a conformation change that triggers signaling via guanine nucleotide-binding proteins (G proteins) and modulates the activity of downstream effectors, such as adenylate cyclase. ADGRG2 is coupled to G(s) G proteins and mediates activation of adenylate cyclase activity. Also able to couple with G(q) G proteins in vitro. May regulate fluid exchange within epididymis. In Mus musculus (Mouse), this protein is Adhesion G-protein coupled receptor G2.